The sequence spans 94 residues: Small ubiquitin-related modifier 3 (94 aa).

Lys-11 participates in a covalent cross-link: Glycyl lysine isopeptide (Lys-Gly) (interchain with G-Cter in SUMO). The 78-residue stretch at 15 to 92 folds into the Ubiquitin-like domain; that stretch reads DHINLKVAGQ…IDVFQQQTGG (78 aa). A Glycyl lysine isopeptide (Gly-Lys) (interchain with K-? in acceptor proteins) cross-link involves residue Gly-92. Positions 93–94 are excised as a propeptide; that stretch reads SC.

It belongs to the ubiquitin family. SUMO subfamily. In terms of assembly, interacts with sae2 and ube2i. Covalently attached to a number of proteins. In terms of processing, polymeric chains can be formed through Lys-11 cross-linking. Post-translationally, cleavage of precursor form by a sentrin-specific protease is necessary for function.

The protein resides in the cytoplasm. The protein localises to the nucleus. It is found in the PML body. Ubiquitin-like protein which can be covalently attached to target lysines either as a monomer or as a lysine-linked polymer. Does not seem to be involved in protein degradation and may function as an antagonist of ubiquitin in the degradation process. Plays a role in a number of cellular processes such as nuclear transport, DNA replication and repair, mitosis and signal transduction. Covalent attachment to its substrates requires prior activation by the E1 complex sae1-sae2 and linkage to the E2 enzyme ube2i. In Danio rerio (Zebrafish), this protein is Small ubiquitin-related modifier 3 (sumo3).